The primary structure comprises 1499 residues: MSLASDKKDADVASTTTTAQDDDNLSTYHGFDHHVQDQVRQLARTLTQQSSLHQKKEHTLPEEGINPIFTNTEADDYNPRLDPTSDEFSSAEWVQNMSNISNSDPDYYKPYSLGCYWKDLVATGESADIEYQANFLNGPYKGLKTVYNTVVPSTASSKDKNFKILKSMEGAVNPGELLVVLGRPGSGCTTLLKSISSNTHGFNIAKESTISYSGMTPNDIRKHFRGEVVYNAEADIHLPHLTVYQTLLTVARLKTPQNRLKGIDRETYARHLTEVAMATFGLSHTRNTKVGNDLVRGVSGGERKRVSIAEVSICGSKFQCWDNATRGLDSATALEFIRALKVQASISNAAATVAIYQCSQDAYDLFDKVCVLYDGYQIYFGPAGKAKEYFQKMGYVSPERQTTADFLTAVTSPSERIINQDYINRGIFVPQTPKEMWEYWRASEDHADLIKEIDSKLSDNYDANLAEIKDAHVARQSKRARPSSPYTVSYGMQIKYLLIRNFWRIKQSSGVTLFMVIGNSSMAFILGSMFYKVMKHNTTSTFYFRGAAMFFAVLFNAFSSLLEIFSLFEARPITEKHRTYSLYHPSADAFASILSEVPAKLITAVCFNIIYYFLVNFRRNGGVFFFYFLINIVAVFAMSHLFRCVGSVSKTLSAAMVPASMLLLGLSMYSGFAIPRTKILGWSKWIWYINPLAYLFESLMINEFHDRKFPCSQYIPSGSVYNNVPADSRICSSVGAIRGNDYVLGDDFLRESYSYLHKHKWRGFGIGLAYVIFFLVLYLILCEYNEGAKQKGEILVFPQNIVRRMKKERKLKNVSSDNDVEIGDVSDISDKKILADSSDESEESGANIGLSQSEAIFHWRNLCYDVQIKKETRRILNNVDGWVKPGTLTALMGASGAGKTTLLDCLAERVTMGVITGEVSVDGKQRDDSFARSIGYCQQQDLHLKTSTVRESLRFSAYLRQPADVSIEEKNQYVEDVIKILEMEQYADAVVGVPGEGLNVEQRKRLTIGVELAAKPKLLVFLDEPTSGLDSQTAWSICQLMKKLANHGQAILCTIHQPSAILMQEFDRLLFLQRGGKTVYFGDLGDGCKTMIDYFESHGSHKCPPDANPAEWMLEVVGAAPGSHANQDYHEVWRNSDEYQKVQEELEWMSNELPKKNTNNSETVHKEFATGVLYQCKLVSLRLFQQYWRSPDYLWSKFFLTIFNNIFIGFTFFKADRSLQGLQNQMLAVFMFTVIFNPLLQQYLPSFVQQRDLYEARERPSRTFSWKAFIVSQILVEIPWNILAGTVAFVIYYYAIGFYSNASVAHQLHERGALFWLFSCAFYVYIGSLALFCISFNQVAEAAANMASLMFTLSLSFCGVLVTPNGMPRFWIFMYRVSPLTYLIDGMLSTGVANVAIKCSNYELLRFSPAANLTCGEYLGPYLQTVKTGYIVDPSATDTCELCPYSHTNDFLSSVSSKYSRRWRNWGIFICYIAFNYIAGIFLYWLARVPKKSGKLAKK.

Over residues 1-11 the composition is skewed to basic and acidic residues; sequence MSLASDKKDAD. The disordered stretch occupies residues 1-29; the sequence is MSLASDKKDADVASTTTTAQDDDNLSTYH. 3 N-linked (GlcNAc...) asparagine glycosylation sites follow: Asn-24, Asn-96, and Asn-99. An ABC transporter 1 domain is found at 146–399; the sequence is VYNTVVPSTA…FQKMGYVSPE (254 aa). Ser-307 is subject to Phosphoserine. N-linked (GlcNAc...) asparagine glycosylation is present at Asn-323. Ser-484 bears the Phosphoserine mark. A helical membrane pass occupies residues 510–530; that stretch reads GVTLFMVIGNSSMAFILGSMF. Asn-537 carries an N-linked (GlcNAc...) asparagine glycan. 5 helical membrane passes run 548 to 568, 597 to 617, 622 to 642, 654 to 674, and 763 to 783; these read AMFF…FSLF, VPAK…LVNF, GVFF…SHLF, AAMV…GFAI, and GFGI…ILCE. The N-linked (GlcNAc...) asparagine glycan is linked to Asn-813. An ABC transporter 2 domain is found at 857 to 1099; that stretch reads FHWRNLCYDV…TMIDYFESHG (243 aa). Residue 893 to 900 participates in ATP binding; the sequence is GASGAGKT. Asn-1159 is a glycosylation site (N-linked (GlcNAc...) asparagine). 3 helical membrane passes run 1193-1213, 1228-1248, and 1278-1298; these read YLWS…FTFF, AVFM…PSFV, and IPWN…AIGF. Residue Asn-1301 is glycosylated (N-linked (GlcNAc...) asparagine). The next 2 helical transmembrane spans lie at 1314–1334 and 1342–1362; these read LFWL…LFCI and AAAN…GVLV. A glycan (N-linked (GlcNAc...) asparagine) is linked at Asn-1412. Residues 1466–1486 form a helical membrane-spanning segment; that stretch reads WGIFICYIAFNYIAGIFLYWL.

The protein belongs to the ABC transporter superfamily. Post-translationally, phosphorylated at Ser-307 and Ser-484. Ser-307 and Ser-484 are dephosphorylated on glucose depletion and independently rephosphorylated during glucose exposure or under stress.

Its subcellular location is the cell membrane. Its activity is regulated as follows. Inhibited by clorgyline. Inhibited by RC21v3, a 4-methoxy-2,3,6-trimethylbenzenesulphonyl derivative of the D-octapeptide D-FFKWQRRR, via the interaction with the ectodomain. FK506, enniatin, milbemycin alpha-11, and milbemycin beta-9 also inhibit CDR1 activity. Inhibited by milbemycin A3/A4 oxim derivatives. Functionally, pleiotropic ABC efflux transporter that transports and confers resistance to structurally and functionally unrelated compounds including rhodamine 6G, Nile red, caspofungin, cycloheximide, or azoles such as fluconazole, itraconazole, ketoconazole, posaconazole, voriconazole, and isavuconazole. Chlorbromuron, itraconazole, yohimbine, ketoconazole, miconazole, clotrimazole, DE-11, tamoxifen, quinidine, verapamil can compete for rhodamine 6G's binding site(s) while compounds such as propanil, chloramphenicol, benomyl, voriconazole, tritylimidazole, ketoconazole, miconazole, tamoxifen, gefitinib shared binding site(s) with fluconazole. Nile red mediated efflux appears to be relatively more specific since only five compounds such as ZW3-12, rhodamine 123, miconazole, clotrimazole, and itraconazole can inhibit its accumulation. Does not use as substrates 4-nitroquinoline 1-oxide (4-NQO) and disulfiram. Does not play a role in the azole resistance in mature biofilms. This chain is Pleiotropic ABC efflux transporter of multiple drugs CDR1, found in Candida glabrata (strain ATCC 2001 / BCRC 20586 / JCM 3761 / NBRC 0622 / NRRL Y-65 / CBS 138) (Yeast).